The following is a 410-amino-acid chain: F-box protein At3g61340 (410 aa).

Residues 17 to 66 (EEKSERIPFDLVIEILLRLPVKSIARFRYVSKLWQSTLRGQHFTESYLTI) form the F-box domain.

The sequence is that of F-box protein At3g61340 from Arabidopsis thaliana (Mouse-ear cress).